We begin with the raw amino-acid sequence, 160 residues long: S-ribosylhomocysteine lyase (160 aa).

Fe cation is bound by residues His57, His61, and Cys127.

Belongs to the LuxS family. In terms of assembly, homodimer. Fe cation is required as a cofactor.

It carries out the reaction S-(5-deoxy-D-ribos-5-yl)-L-homocysteine = (S)-4,5-dihydroxypentane-2,3-dione + L-homocysteine. Functionally, involved in the synthesis of autoinducer 2 (AI-2) which is secreted by bacteria and is used to communicate both the cell density and the metabolic potential of the environment. The regulation of gene expression in response to changes in cell density is called quorum sensing. Catalyzes the transformation of S-ribosylhomocysteine (RHC) to homocysteine (HC) and 4,5-dihydroxy-2,3-pentadione (DPD). This chain is S-ribosylhomocysteine lyase, found in Streptococcus sanguinis (strain SK36).